A 294-amino-acid polypeptide reads, in one-letter code: Glutamyl-Q tRNA(Asp) synthetase (294 aa).

L-glutamate-binding positions include 8 to 12 and E44; that span reads RFAPT. The 'HIGH' region motif lies at 11–21; sequence PTPSGYLHFGS. Zn(2+) is bound by residues C100, C102, Y114, and C118. Y171 and R189 together coordinate L-glutamate. A 'KMSKS' region motif is present at residues 227 to 231; that stretch reads KLGKS. Position 230 (K230) interacts with ATP.

This sequence belongs to the class-I aminoacyl-tRNA synthetase family. GluQ subfamily. Zn(2+) serves as cofactor.

Catalyzes the tRNA-independent activation of glutamate in presence of ATP and the subsequent transfer of glutamate onto a tRNA(Asp). Glutamate is transferred on the 2-amino-5-(4,5-dihydroxy-2-cyclopenten-1-yl) moiety of the queuosine in the wobble position of the QUC anticodon. The protein is Glutamyl-Q tRNA(Asp) synthetase of Ectopseudomonas mendocina (strain ymp) (Pseudomonas mendocina).